The chain runs to 358 residues: MIDAIYNGGLNLVAASWWTGAAWPVIWNLIKIICVVLPLLGAVAYLTLWERKLLGFMQVRFGPNRVGPFGLLQPIADALKLLTKELIQPAAAAKGLFYLGPVMAIMPALGAWAVIPFGPDLALANVNAGLLLVMAITSIEVYGVIIAGWASNSKYAFLGALRASAQMVSYEIAMGFCFLVVIMVSGSMNLTEIVAVQGRGTMTDMGLGFLSWNWLPLFPIFIVYLISVVAEVNRHPFDVVEGEAEIVAGHMVEYSGMGFAIFFLAEYASMWLVSILAVVMFLGGWLPPFDALGFIPGWIWLGIKTFLVVSMFIWIRATFPRFRYDQIMRLGWKIFIPVTLVWLLVVGAWLLSPWNIWK.

A run of 8 helical transmembrane segments spans residues 29 to 49 (LIKIICVVLPLLGAVAYLTLW), 95 to 115 (GLFYLGPVMAIMPALGAWAVI), 130 to 150 (LLLVMAITSIEVYGVIIAGWA), 176 to 196 (FCFLVVIMVSGSMNLTEIVAV), 206 to 226 (GLGFLSWNWLPLFPIFIVYLI), 258 to 280 (GFAIFFLAEYASMWLVSILAVVM), 297 to 317 (GWIWLGIKTFLVVSMFIWIRA), and 334 to 354 (IFIPVTLVWLLVVGAWLLSPW).

It belongs to the complex I subunit 1 family. In terms of assembly, NDH-1 is composed of 14 different subunits. Subunits NuoA, H, J, K, L, M, N constitute the membrane sector of the complex.

The protein resides in the cell inner membrane. It carries out the reaction a quinone + NADH + 5 H(+)(in) = a quinol + NAD(+) + 4 H(+)(out). In terms of biological role, NDH-1 shuttles electrons from NADH, via FMN and iron-sulfur (Fe-S) centers, to quinones in the respiratory chain. The immediate electron acceptor for the enzyme in this species is believed to be ubiquinone. Couples the redox reaction to proton translocation (for every two electrons transferred, four hydrogen ions are translocated across the cytoplasmic membrane), and thus conserves the redox energy in a proton gradient. This subunit may bind ubiquinone. The sequence is that of NADH-quinone oxidoreductase subunit H from Acidovorax sp. (strain JS42).